A 693-amino-acid polypeptide reads, in one-letter code: MEQEKSLDPQLWHACAGSMVQIPSLNSTVFYFAQGHTEHAHAPPDFHAPRVPPLILCRVVSVKFLADAETDEVFAKITLLPLPGNDLDLENDAVLGLTPPSSDGNGNGKEKPASFAKTLTQSDANNGGGFSVPRYCAETIFPRLDYSAEPPVQTVIAKDIHGETWKFRHIYRGTPRRHLLTTGWSTFVNQKKLIAGDSIVFLRSESGDLCVGIRRAKRGGLGSNAGSDNPYPGFSGFLRDDESTTTTSKLMMMKRNGNNDGNAAATGRVRVEAVAEAVARAACGQAFEVVYYPRASTPEFCVKAADVRSAMRIRWCSGMRFKMAFETEDSSRISWFMGTVSAVQVADPIRWPNSPWRLLQVAWDEPDLLQNVKRVSPWLVELVSNMPTIHLSPFSPRKKIRIPQPFEFPFHGTKFPIFSPGFANNGGGESMCYLSNDNNNAPAGIQGARQAQQLFGSPSPSLLSDLNLSSYTGNNKLHSPAMFLSSFNPRHHHYQARDSENSNNISCSLTMGNPAMVQDKKKSVGSVKTHQFVLFGQPILTEQQVMNRKRFLEEEAEAEEEKGLVARGLTWNYSLQGLETGHCKVFMESEDVGRTLDLSVIGSYQELYRKLAEMFHIEERSDLLTHVVYRDANGVIKRIGDEPFSDFMKATKRLTIKMDIGGDNVRKTWITGIRTGENGIDASTKTGPLSIFA.

Positions 115–217 (FAKTLTQSDA…DLCVGIRRAK (103 aa)) form a DNA-binding region, TF-B3. One can recognise a PB1 domain in the interval 580-668 (TGHCKVFMES…DIGGDNVRKT (89 aa)).

The protein belongs to the ARF family. Homodimers and heterodimers. Expressed in the whole plant.

It localises to the nucleus. In terms of biological role, auxin response factors (ARFs) are transcriptional factors that bind specifically to the DNA sequence 5'-TGTCTC-3' found in the auxin-responsive promoter elements (AuxREs). Could act as transcriptional activator or repressor. Formation of heterodimers with Aux/IAA proteins may alter their ability to modulate early auxin response genes expression. This chain is Auxin response factor 10 (ARF10), found in Arabidopsis thaliana (Mouse-ear cress).